The sequence spans 161 residues: Vitamin K epoxide reductase complex subunit 1 (161 aa).

The Cytoplasmic segment spans residues 1 to 9 (MGTTWRSPG). The chain crosses the membrane as a helical span at residues 10 to 29 (LVRLALCLAGLALSLYALHV). The Lumenal segment spans residues 30 to 80 (KAARARDENYRALCDVGTAISCSRVFSSRWGRGFGLVEHMLGADSVLNQSN). Cys43 and Cys51 are oxidised to a cystine. Asn80 is a (S)-warfarin binding site. The chain crosses the membrane as a helical span at residues 81-95 (SIFGCLFYTLQLLLG). At 96 to 100 (CLRGR) the chain is on the cytoplasmic side. Residues 101–128 (WASILLVLSSLVSVAGSVYLAWILFFVL) traverse the membrane as a helical segment. Topologically, residues 129-131 (YDF) are lumenal. A disulfide bond links Cys132 and Cys135. A helical transmembrane segment spans residues 132–153 (CIVCITTYAINVGLMLLSFQKV). Residues Cys135 and Tyr139 each coordinate phylloquinone. Tyr139 is a (S)-warfarin binding site. Residues 154–161 (PEHKTKKH) lie on the Cytoplasmic side of the membrane.

Belongs to the VKOR family. In terms of tissue distribution, detected in liver.

It localises to the endoplasmic reticulum membrane. It carries out the reaction phylloquinone + [protein]-disulfide + H2O = 2,3-epoxyphylloquinone + [protein]-dithiol. It catalyses the reaction phylloquinol + [protein]-disulfide = phylloquinone + [protein]-dithiol. With respect to regulation, inhibited by warfarin (coumadin). Warfarin locks VKORC1 in both redox states into the closed conformation. In terms of biological role, involved in vitamin K metabolism. Catalytic subunit of the vitamin K epoxide reductase (VKOR) complex which reduces inactive vitamin K 2,3-epoxide to active vitamin K. Vitamin K is required for the gamma-carboxylation of various proteins, including clotting factors, and is required for normal blood coagulation, but also for normal bone development. The chain is Vitamin K epoxide reductase complex subunit 1 (Vkorc1) from Mus musculus (Mouse).